The sequence spans 419 residues: 3-isopropylmalate dehydratase large subunit (419 aa).

Residues C300, C360, and C363 each coordinate [4Fe-4S] cluster.

This sequence belongs to the aconitase/IPM isomerase family. LeuC type 2 subfamily. In terms of assembly, heterodimer of LeuC and LeuD. It depends on [4Fe-4S] cluster as a cofactor.

The enzyme catalyses (2R,3S)-3-isopropylmalate = (2S)-2-isopropylmalate. It participates in amino-acid biosynthesis; L-leucine biosynthesis; L-leucine from 3-methyl-2-oxobutanoate: step 2/4. In terms of biological role, catalyzes the isomerization between 2-isopropylmalate and 3-isopropylmalate, via the formation of 2-isopropylmaleate. In Clostridium botulinum (strain Alaska E43 / Type E3), this protein is 3-isopropylmalate dehydratase large subunit.